The chain runs to 114 residues: Beta-microseminoprotein J1 (114 aa).

Residues 1 to 20 (MNVLLGGLVIFATFVTLCNA) form the signal peptide. 5 disulfides stabilise this stretch: Cys-22–Cys-70, Cys-38–Cys-62, Cys-57–Cys-93, Cys-60–Cys-69, and Cys-84–Cys-107.

This sequence belongs to the beta-microseminoprotein family.

The protein localises to the secreted. This is Beta-microseminoprotein J1 (MSPJ) from Saguinus oedipus (Cotton-top tamarin).